The sequence spans 287 residues: tRNA-cytidine(32) 2-sulfurtransferase (287 aa).

Residues 39–44 (SGGKDS) carry the PP-loop motif motif. [4Fe-4S] cluster contacts are provided by C114, C117, and C205.

It belongs to the TtcA family. As to quaternary structure, homodimer. Mg(2+) is required as a cofactor. The cofactor is [4Fe-4S] cluster.

The protein resides in the cytoplasm. The catalysed reaction is cytidine(32) in tRNA + S-sulfanyl-L-cysteinyl-[cysteine desulfurase] + AH2 + ATP = 2-thiocytidine(32) in tRNA + L-cysteinyl-[cysteine desulfurase] + A + AMP + diphosphate + H(+). It functions in the pathway tRNA modification. Functionally, catalyzes the ATP-dependent 2-thiolation of cytidine in position 32 of tRNA, to form 2-thiocytidine (s(2)C32). The sulfur atoms are provided by the cysteine/cysteine desulfurase (IscS) system. The sequence is that of tRNA-cytidine(32) 2-sulfurtransferase from Dechloromonas aromatica (strain RCB).